A 227-amino-acid polypeptide reads, in one-letter code: MKLCVALDLANSDECLRVARELKGLDVWLKVGLRAYLRDGFKFINELKNVDNFKIFLDLKVHDIPNTMADACEVISQIGADMINIHASAGRVAMNSVMERLSKLNNRPLVLAVSALTSFDEESFSEIYAAHIKESVVKFSKISYECGLDGIVCSVYESLDIKNATSSNFLTLTPGIRPFGESNDDQKRVANLKTAMSNKSDFIVVGRPIYQSKNPREITEKILYNIT.

Substrate-binding positions include aspartate 8, lysine 30, 58-67 (DLKVHDIPNT), threonine 117, arginine 177, glutamine 186, glycine 206, and arginine 207. Catalysis depends on lysine 60, which acts as the Proton donor.

This sequence belongs to the OMP decarboxylase family. Type 1 subfamily. As to quaternary structure, homodimer.

The catalysed reaction is orotidine 5'-phosphate + H(+) = UMP + CO2. The protein operates within pyrimidine metabolism; UMP biosynthesis via de novo pathway; UMP from orotate: step 2/2. Its function is as follows. Catalyzes the decarboxylation of orotidine 5'-monophosphate (OMP) to uridine 5'-monophosphate (UMP). This is Orotidine 5'-phosphate decarboxylase from Campylobacter fetus subsp. fetus (strain 82-40).